We begin with the raw amino-acid sequence, 164 residues long: Transcription elongation factor GreA (164 aa).

The stretch at 50–75 (YHAAREEQGQQEARIRQLQDLLNIAK) forms a coiled coil.

Belongs to the GreA/GreB family.

Necessary for efficient RNA polymerase transcription elongation past template-encoded arresting sites. The arresting sites in DNA have the property of trapping a certain fraction of elongating RNA polymerases that pass through, resulting in locked ternary complexes. Cleavage of the nascent transcript by cleavage factors such as GreA or GreB allows the resumption of elongation from the new 3'terminus. GreA releases sequences of 2 to 3 nucleotides. The protein is Transcription elongation factor GreA of Mycobacterium leprae (strain Br4923).